Here is a 504-residue protein sequence, read N- to C-terminus: Maturase K (504 aa).

Belongs to the intron maturase 2 family. MatK subfamily.

The protein resides in the plastid. The protein localises to the chloroplast. Its function is as follows. Usually encoded in the trnK tRNA gene intron. Probably assists in splicing its own and other chloroplast group II introns. In Vigna mungo (Black gram), this protein is Maturase K.